Consider the following 276-residue polypeptide: Urease accessory protein UreD (276 aa).

The protein belongs to the UreD family. In terms of assembly, ureD, UreF and UreG form a complex that acts as a GTP-hydrolysis-dependent molecular chaperone, activating the urease apoprotein by helping to assemble the nickel containing metallocenter of UreC. The UreE protein probably delivers the nickel.

Its subcellular location is the cytoplasm. Its function is as follows. Required for maturation of urease via the functional incorporation of the urease nickel metallocenter. The polypeptide is Urease accessory protein UreD (Verminephrobacter eiseniae (strain EF01-2)).